Reading from the N-terminus, the 188-residue chain is Elongation factor P (188 aa).

Belongs to the elongation factor P family.

Its subcellular location is the cytoplasm. The protein operates within protein biosynthesis; polypeptide chain elongation. Involved in peptide bond synthesis. Stimulates efficient translation and peptide-bond synthesis on native or reconstituted 70S ribosomes in vitro. Probably functions indirectly by altering the affinity of the ribosome for aminoacyl-tRNA, thus increasing their reactivity as acceptors for peptidyl transferase. In Bifidobacterium longum (strain DJO10A), this protein is Elongation factor P.